The chain runs to 426 residues: Proline--tRNA ligase (426 aa).

The protein belongs to the class-II aminoacyl-tRNA synthetase family. ProS type 2 subfamily. As to quaternary structure, homodimer.

The protein localises to the cytoplasm. It catalyses the reaction tRNA(Pro) + L-proline + ATP = L-prolyl-tRNA(Pro) + AMP + diphosphate. Catalyzes the attachment of proline to tRNA(Pro) in a two-step reaction: proline is first activated by ATP to form Pro-AMP and then transferred to the acceptor end of tRNA(Pro). The protein is Proline--tRNA ligase of Anaplasma phagocytophilum (strain HZ).